The chain runs to 566 residues: Transcription factor P14E8.02 (566 aa).

A disordered region spans residues 1-32; sequence MNISSQNVLLPSPIPSSSPMASHKKSWLSKHP. S73 is subject to Phosphoserine. Residues 86 to 137 form the FHA domain; sequence NKIGRSSQQCDHVLSTVDKAISRVHAIVTCTQDRMIIECVGWNGMIVSDKMR. 4 disordered regions span residues 191 to 217, 269 to 291, 312 to 334, and 364 to 437; these read EENR…SQDY, DCSK…LLNG, ESDD…IEES, and FTNH…TKEN. The span at 314-330 shows a compositional bias: acidic residues; that stretch reads DDLDKNEEISEGEEYTP. Polar residues-rich tracts occupy residues 373 to 383 and 414 to 428; these read NSNITTSNDSP and DENT…PSSH. 2 positions are modified to phosphoserine: S379 and S382.

It belongs to the PLM2/TOS4 family.

It is found in the nucleus. Functionally, probable transcriptional regulatory protein Required for G1/S progression. The protein is Transcription factor P14E8.02 of Schizosaccharomyces pombe (strain 972 / ATCC 24843) (Fission yeast).